The chain runs to 110 residues: Small EDRK-rich factor 1 (110 aa).

Residues 1 to 30 are compositionally biased toward basic and acidic residues; it reads MARGNQRELARQKNMKKTQEISKGKRKEDS. Positions 1–61 are disordered; that stretch reads MARGNQRELA…GPHLPLKAPR (61 aa). Positions 11–17 are required for SNCA binding; sequence RQKNMKK. Positions 34–50 are enriched in low complexity; the sequence is SQRKQSSGGQKSESKMS.

It belongs to the SERF family. As to quaternary structure, interacts with SNCA; this interaction promotes the aggregation of SNCA. In terms of tissue distribution, isoform Long is predominantly expressed in heart, brain and skeletal muscle. Isoform Short and Isoform Long are expressed throughout the central nervous system, including spinal cord.

The protein localises to the cytoplasm. It localises to the cytosol. Its subcellular location is the nucleus. Its function is as follows. Positive regulator of amyloid protein aggregation and proteotoxicity. Induces conformational changes in amyloid proteins, such as APP, HTT, and SNCA, driving them into compact formations preceding the formation of aggregates. The sequence is that of Small EDRK-rich factor 1 (SERF1A) from Homo sapiens (Human).